The following is a 154-amino-acid chain: Putative NADPH-dependent 7-cyano-7-deazaguanine reductase (154 aa).

Asp52 functions as the Proton donor in the catalytic mechanism. Residues 67–69 (VES) and 86–87 (HE) each bind substrate.

This sequence belongs to the GTP cyclohydrolase I family. QueF type 1 subfamily.

The protein localises to the cytoplasm. It carries out the reaction 7-aminomethyl-7-carbaguanine + 2 NADP(+) = 7-cyano-7-deazaguanine + 2 NADPH + 3 H(+). It participates in tRNA modification; tRNA-queuosine biosynthesis. Catalyzes the NADPH-dependent reduction of 7-cyano-7-deazaguanine (preQ0) to 7-aminomethyl-7-deazaguanine (preQ1). This is Putative NADPH-dependent 7-cyano-7-deazaguanine reductase from Streptococcus pneumoniae serotype 4 (strain ATCC BAA-334 / TIGR4).